A 503-amino-acid polypeptide reads, in one-letter code: ATP synthase subunit alpha (503 aa).

170 to 177 (GDKQTGKT) provides a ligand contact to ATP.

This sequence belongs to the ATPase alpha/beta chains family. As to quaternary structure, F-type ATPases have 2 components, CF(1) - the catalytic core - and CF(0) - the membrane proton channel. CF(1) has five subunits: alpha(3), beta(3), gamma(1), delta(1), epsilon(1). CF(0) has three main subunits: a(1), b(2) and c(9-12). The alpha and beta chains form an alternating ring which encloses part of the gamma chain. CF(1) is attached to CF(0) by a central stalk formed by the gamma and epsilon chains, while a peripheral stalk is formed by the delta and b chains.

The protein resides in the cell inner membrane. The enzyme catalyses ATP + H2O + 4 H(+)(in) = ADP + phosphate + 5 H(+)(out). Functionally, produces ATP from ADP in the presence of a proton gradient across the membrane. The alpha chain is a regulatory subunit. In Helicobacter pylori (strain G27), this protein is ATP synthase subunit alpha.